We begin with the raw amino-acid sequence, 838 residues long: Valine--tRNA ligase (838 aa).

A 'HIGH' region motif is present at residues 46–56 (PNLTGTLHIGH). The 'KMSKS' region motif lies at 514–518 (KMSKS). An ATP-binding site is contributed by Lys517. Positions 768–838 (VDNAANNLAH…HLIAKLTKAE (71 aa)) form a coiled coil.

Belongs to the class-I aminoacyl-tRNA synthetase family. ValS type 1 subfamily. In terms of assembly, monomer.

It localises to the cytoplasm. The enzyme catalyses tRNA(Val) + L-valine + ATP = L-valyl-tRNA(Val) + AMP + diphosphate. Catalyzes the attachment of valine to tRNA(Val). As ValRS can inadvertently accommodate and process structurally similar amino acids such as threonine, to avoid such errors, it has a 'posttransfer' editing activity that hydrolyzes mischarged Thr-tRNA(Val) in a tRNA-dependent manner. In Mycoplasma pneumoniae (strain ATCC 29342 / M129 / Subtype 1) (Mycoplasmoides pneumoniae), this protein is Valine--tRNA ligase.